The primary structure comprises 1956 residues: Sodium channel protein type 10 subunit alpha (1956 aa).

The Cytoplasmic portion of the chain corresponds to 1 to 125 (MEFPIGSLET…FNLIRRTAIK (125 aa)). Positions 27–54 (QIAAKQGTKKAREKHREQKDQEEKPRPQ) are disordered. Residues 40 to 54 (KHREQKDQEEKPRPQ) are compositionally biased toward basic and acidic residues. An I repeat occupies 116 to 405 (FNLIRRTAIK…VTMAYEEQNQ (290 aa)). The helical transmembrane segment at 126–149 (VSVHSWFSLFITVTILVNCVCMTR) threads the bilayer. Over 150 to 154 (TDLPE) the chain is Extracellular. A helical transmembrane segment spans residues 155–174 (KIEYVFTVIYTFEALIKILA). At 175 to 187 (RGFCLNEFTYLRD) the chain is on the cytoplasmic side. The chain crosses the membrane as a helical span at residues 188 to 206 (PWNWLDFSVITLAYVGTAI). Over 207–212 (DLRGIS) the chain is Extracellular. The chain crosses the membrane as a helical; Voltage-sensor span at residues 213–232 (GLRTFRVLRALKTVSVIPGL). Residues 233 to 248 (KVIVGALIHSVKKLAD) are Cytoplasmic-facing. A helical transmembrane segment spans residues 249 to 272 (VTILTIFCLSVFALVGLQLFKGNL). The Extracellular portion of the chain corresponds to 273–341 (KNKCVKNDMA…PDFNYTSFDS (69 aa)). C276 and C319 are joined by a disulfide. Residues N284, N288, N312, and N335 are each glycosylated (N-linked (GlcNAc...) asparagine). Positions 342 to 366 (FAWAFLSLFRLMTQDSWERLYQQTL) form an intramembrane region, pore-forming. At 367 to 373 (RTSGKIY) the chain is on the extracellular side. Residues 374-399 (MIFFVLVIFLGSFYLVNLILAVVTMA) traverse the membrane as a helical segment. At 400 to 659 (YEEQNQATTD…MWVKLKTILF (260 aa)) the chain is on the cytoplasmic side. Phosphoserine occurs at positions 441, 444, 467, and 479. The segment covering 443–454 (HSHNGSPLTSKN) has biased composition (polar residues). Disordered regions lie at residues 443–485 (HSHN…YNQR) and 500–580 (SHGS…LAPG). A compositionally biased stretch (basic and acidic residues) spans 561–570 (DSRHGEDEHQ). Phosphoserine occurs at positions 612 and 615. An II repeat occupies 647 to 911 (CCPMWVKLKT…EDDGEVNNLQ (265 aa)). The helical transmembrane segment at 660–684 (GLVTDPFAELTITLCIVVNTIFMAM) threads the bilayer. Over 685–695 (EHHGMSPTFEA) the chain is Extracellular. The helical transmembrane segment at 696–719 (MLQIGNIVFTIFFTAEMVFKIIAF) threads the bilayer. Topologically, residues 720–727 (DPYYYFQK) are cytoplasmic. A helical transmembrane segment spans residues 728–747 (KWNIFDCIIVTVSLLELGVA). At 748 to 753 (KKGSLS) the chain is on the extracellular side. A helical; Voltage-sensor membrane pass occupies residues 754-773 (VLRSFRLLRVFKLAKSWPTL). Topologically, residues 774–789 (NTLIKIIGNSVGALGN) are cytoplasmic. Residues 790-810 (LTIILAIIVFVFALVGKQLLG) form a helical membrane-spanning segment. Topologically, residues 811 to 834 (ENYRNNRKNISAPHEDWPRWHMHD) are extracellular. N819 is a glycosylation site (N-linked (GlcNAc...) asparagine). The pore-forming intramembrane region spans 835–855 (FFHSFLIVFRILCGEWIENMW). Topologically, residues 856–864 (ACMEVGQKS) are extracellular. The cysteines at positions 857 and 866 are disulfide-linked. Residues 865–890 (ICLILFLTVMVLGNLVVLNLFIALLL) traverse the membrane as a helical segment. Over 891–1147 (NSFSADNLTA…GWQVRKTCYR (257 aa)) the chain is Cytoplasmic. Disordered regions lie at residues 963 to 986 (AANT…EHSD) and 1041 to 1089 (DHLT…GSTV). One copy of the III repeat lies at 1140–1449 (QVRKTCYRIV…KKYYNAMKKL (310 aa)). The chain crosses the membrane as a helical span at residues 1148 to 1171 (IVEHSWFESFIIFMILLSSGSLAF). Over 1172 to 1184 (EDYYLDQKPTVKA) the chain is Extracellular. The chain crosses the membrane as a helical span at residues 1185-1210 (LLEYTDRVFTFIFVFEMLLKWVAYGF). The Cytoplasmic segment spans residues 1211 to 1216 (KKYFTN). A helical transmembrane segment spans residues 1217–1238 (AWCWLDFLIVNISLISLTAKIL). The Extracellular segment spans residues 1239–1242 (EYSE). The chain crosses the membrane as a helical; Voltage-sensor span at residues 1243–1264 (VAPIKALRTLRALRPLRALSRF). Topologically, residues 1265 to 1283 (EGMRVVVDALVGAIPSIMN) are cytoplasmic. The chain crosses the membrane as a helical span at residues 1284-1311 (VLLVCLIFWLIFSIMGVNLFAGKFWRCI). N-linked (GlcNAc...) asparagine glycosylation is found at N1312, N1328, and N1336. Residues 1312-1353 (NYTDGEFSLVPLSIVNNKSDCKIQNSTGSFFWVNVKVNFDNV) lie on the Extracellular side of the membrane. Positions 1354-1375 (AMGYLALLQVATFKGWMDIMYA) form an intramembrane region, pore-forming. Topologically, residues 1376-1391 (AVDSREVNMQPKWEDN) are extracellular. Residues 1392-1418 (VYMYLYFVIFIIFGGFFTLNLFVGVII) traverse the membrane as a helical segment. At 1419–1471 (DNFNQQKKKLGGQDIFMTEEQKKYYNAMKKLGSKKPQKPIPRPLNKFQGFVFD) the chain is on the cytoplasmic side. Residue S1451 is modified to Phosphoserine; by PKC. An IV repeat occupies 1458 to 1757 (IPRPLNKFQG…WEKFDPEATQ (300 aa)). Residues 1472 to 1495 (IVTRQAFDITIMVLICLNMITMMV) traverse the membrane as a helical segment. Over 1496 to 1506 (ETDDQSEEKTK) the chain is Extracellular. A helical transmembrane segment spans residues 1507–1530 (ILGKINQFFVAVFTGECVMKMFAL). Topologically, residues 1531–1536 (RQYYFT) are cytoplasmic. Residues 1537–1560 (NGWNVFDFIVVVLSIASLIFSAIL) form a helical membrane-spanning segment. Residues 1561–1572 (KSLQSYFSPTLF) are Extracellular-facing. The chain crosses the membrane as a helical; Voltage-sensor span at residues 1573-1594 (RVIRLARIGRILRLIRAAKGIR). Topologically, residues 1595 to 1609 (TLLFALMMSLPALFN) are cytoplasmic. Residues 1610–1632 (IGLLLFLVMFIYSIFGMSSFPHV) traverse the membrane as a helical segment. The Extracellular segment spans residues 1633–1646 (RWEAGIDDMFNFQT). An intramembrane region (pore-forming) is located at residues 1647–1669 (FANSMLCLFQITTSAGWDGLLSP). Topologically, residues 1670–1697 (ILNTGPPYCDPNLPNSNGTRGDCGSPAV) are extracellular. N1686 carries an N-linked (GlcNAc...) asparagine glycan. Residues 1698–1722 (GIIFFTTYIIISFLIMVNMYIAVIL) form a helical membrane-spanning segment. Residues 1723-1956 (ENFNVATEES…TSMELIAPGP (234 aa)) are Cytoplasmic-facing. The 30-residue stretch at 1851-1880 (EDISATVIQKAYRSYVLHRSMALSNTPCVP) folds into the IQ domain. The segment at 1909–1956 (SETASATSFPPSYESVTRGLSDRVNMRTSSSIQNEDEATSMELIAPGP) is disordered.

Belongs to the sodium channel (TC 1.A.1.10) family. Nav1.8/SCN10A subfamily. The channel consists of an ion conducting pore forming alpha-subunit regulated by one or more associated auxiliary subunits SCN1B, SCN2B and SCN3B; electrophysiological properties may vary depending on the type of the associated beta subunits. Found in a number of complexes with PRX, DYNLT1 and PDZD2. Interacts with proteins such as FSTL1, PRX, DYNLT1, PDZD2, S100A10 and many others. Interacts with NEDD4 and NEDD4L. Post-translationally, ubiquitinated by NEDD4L; which promotes its endocytosis. Phosphorylation at Ser-1451 by PKC in a highly conserved cytoplasmic loop slows inactivation of the sodium channel and reduces peak sodium currents. In terms of processing, lacks the cysteine which covalently binds the conotoxin GVIIJ. This cysteine (position 816) is speculated in other sodium channel subunits alpha to be implied in covalent binding with the sodium channel subunit beta-2 or beta-4. Expressed in the dorsal root ganglia and sciatic nerve.

It is found in the cell membrane. The catalysed reaction is Na(+)(in) = Na(+)(out). In terms of biological role, tetrodotoxin-resistant channel that mediates the voltage-dependent sodium ion permeability of excitable membranes. Assuming opened or closed conformations in response to the voltage difference across the membrane, the protein forms a sodium-selective channel through which sodium ions may pass in accordance with their electrochemical gradient. Plays a role in neuropathic pain mechanisms. The chain is Sodium channel protein type 10 subunit alpha from Homo sapiens (Human).